Consider the following 134-residue polypeptide: RxLR effector protein 4 (134 aa).

The signal sequence occupies residues 1–22 (MRSLFYIAVAVAVFARSSAVAA). Residues 43 to 65 (AMASSDSRKRFLRATDPEDGDLQ) are disordered. Positions 48 to 58 (DSRKRFLRATD) are enriched in basic and acidic residues. The RxLR-dEER motif lies at 52–71 (RFLRATDPEDGDLQADDEER).

This sequence belongs to the RxLR effector family.

The protein resides in the secreted. Functionally, effector that enhances plant susceptibility to P.parasitica in Nicotiana benthamiana and Arabidopsis thaliana. Triggers non-specific cell death in a variety of plants, including tobacco, tomato, potato and A.thaliana. E4-induced cell death is dependent on HSP90, NPK and SGT1, suggesting that PpE4 is recognized by the plant immune system. The sequence is that of RxLR effector protein 4 from Phytophthora nicotianae (strain INRA-310) (Phytophthora parasitica).